Here is a 96-residue protein sequence, read N- to C-terminus: Protein Vpr (96 aa).

Positions Met1–Leu42 are homooligomerization. Residues Ser79, Ser94, and Ser96 each carry the phosphoserine; by host modification.

This sequence belongs to the HIV-1 VPR protein family. Homooligomer, may form homodimer. Interacts with p6-gag region of the Pr55 Gag precursor protein through a (Leu-X-X)4 motif near the C-terminus of the P6gag protein. Interacts with host UNG. May interact with host RAD23A/HHR23A. Interacts with host VPRBP/DCAF1, leading to hijack the CUL4A-RBX1-DDB1-DCAF1/VPRBP complex, mediating ubiquitination of host proteins such as TERT and ZGPAT and arrest of the cell cycle in G2 phase. Post-translationally, phosphorylated on several residues by host. These phosphorylations regulate VPR activity for the nuclear import of the HIV-1 pre-integration complex.

It is found in the virion. The protein resides in the host nucleus. The protein localises to the host extracellular space. In terms of biological role, during virus replication, may deplete host UNG protein, and incude G2-M cell cycle arrest. Acts by targeting specific host proteins for degradation by the 26S proteasome, through association with the cellular CUL4A-DDB1 E3 ligase complex by direct interaction with host VPRPB/DCAF-1. Cell cycle arrest reportedly occurs within hours of infection and is not blocked by antiviral agents, suggesting that it is initiated by the VPR carried into the virion. Additionally, VPR induces apoptosis in a cell cycle dependent manner suggesting that these two effects are mechanistically linked. Detected in the serum and cerebrospinal fluid of AIDS patient, VPR may also induce cell death to bystander cells. Functionally, during virus entry, plays a role in the transport of the viral pre-integration (PIC) complex to the host nucleus. This function is crucial for viral infection of non-dividing macrophages. May act directly at the nuclear pore complex, by binding nucleoporins phenylalanine-glycine (FG)-repeat regions. The polypeptide is Protein Vpr (Human immunodeficiency virus type 1 group M subtype D (isolate Z2/CDC-Z34) (HIV-1)).